The following is a 184-amino-acid chain: Peptide deformylase 2 (184 aa).

The Fe cation site is built by cysteine 110 and histidine 153. Glutamate 154 is an active-site residue. Fe cation is bound at residue histidine 157.

The protein belongs to the polypeptide deformylase family. The cofactor is Fe(2+).

It carries out the reaction N-terminal N-formyl-L-methionyl-[peptide] + H2O = N-terminal L-methionyl-[peptide] + formate. Functionally, removes the formyl group from the N-terminal Met of newly synthesized proteins. Requires at least a dipeptide for an efficient rate of reaction. N-terminal L-methionine is a prerequisite for activity but the enzyme has broad specificity at other positions. The chain is Peptide deformylase 2 from Bacillus anthracis.